Here is a 271-residue protein sequence, read N- to C-terminus: Formamidopyrimidine-DNA glycosylase (271 aa).

Pro-2 (schiff-base intermediate with DNA) is an active-site residue. The active-site Proton donor is the Glu-3. Residue Lys-57 is the Proton donor; for beta-elimination activity of the active site. DNA is bound by residues His-90, Arg-109, and Lys-151. Residues 236–270 (HVYGRGGETCTQCGNLLSEIRLGQRTTVFCGICQT) form an FPG-type zinc finger. Arg-260 (proton donor; for delta-elimination activity) is an active-site residue.

Belongs to the FPG family. Monomer. The cofactor is Zn(2+).

It carries out the reaction Hydrolysis of DNA containing ring-opened 7-methylguanine residues, releasing 2,6-diamino-4-hydroxy-5-(N-methyl)formamidopyrimidine.. It catalyses the reaction 2'-deoxyribonucleotide-(2'-deoxyribose 5'-phosphate)-2'-deoxyribonucleotide-DNA = a 3'-end 2'-deoxyribonucleotide-(2,3-dehydro-2,3-deoxyribose 5'-phosphate)-DNA + a 5'-end 5'-phospho-2'-deoxyribonucleoside-DNA + H(+). In terms of biological role, involved in base excision repair of DNA damaged by oxidation or by mutagenic agents. Acts as a DNA glycosylase that recognizes and removes damaged bases. Has a preference for oxidized purines, such as 7,8-dihydro-8-oxoguanine (8-oxoG). Has AP (apurinic/apyrimidinic) lyase activity and introduces nicks in the DNA strand. Cleaves the DNA backbone by beta-delta elimination to generate a single-strand break at the site of the removed base with both 3'- and 5'-phosphates. The protein is Formamidopyrimidine-DNA glycosylase of Shewanella sp. (strain MR-7).